Here is a 349-residue protein sequence, read N- to C-terminus: Lachesin (349 aa).

An N-terminal signal peptide occupies residues 1 to 18 (MDLRLYTIFVGFFSVVYA). The 106-residue stretch at 22 to 127 (PTISYISQEQ…NKITAEVDLQ (106 aa)) folds into the Ig-like V-type domain. An intrachain disulfide couples cysteine 43 to cysteine 110. Ig-like C2-type domains lie at 132 to 218 (PVIS…IAVE) and 222 to 315 (PPVI…VELF). Asparagine 137 carries an N-linked (GlcNAc...) asparagine glycan. Intrachain disulfides connect cysteine 154/cysteine 201 and cysteine 244/cysteine 299. Glycine 332 is lipidated: GPI-anchor amidated glycine. Positions 333–349 (DAAEISTSMALILISTI) are cleaved as a propeptide — removed in mature form.

Post-translationally, the N-terminus is blocked. As to expression, expressed by all neurogenic cells early, but only those cells that become neuroblasts continue to express it. Expressed by neuroblasts, ganglion mother cells and neurons early in their lives, but expression becomes restricted to a subset of neurons as development progresses. Expressed by sensory neurons as they delaminate from the body wall ectoderm. It is also present on growing axons of the CNS and PNS and becomes restricted to a subset of axons later in development.

It is found in the cell membrane. Its function is as follows. May play a role in early neuronal differentiation and axon outgrowth. This Schistocerca americana (American grasshopper) protein is Lachesin (LAC).